The primary structure comprises 346 residues: Ly6/PLAUR domain-containing protein 3 (346 aa).

A signal peptide spans 1–30 (MDPARKAGAQAMIWTAGWLLLLLLRGGAQA). 2 UPAR/Ly6 domains span residues 33–126 (CYSC…ALDP) and 140–222 (CYSC…SRCN). 4 N-linked (GlcNAc...) asparagine glycosylation sites follow: N118, N163, N176, and N183. Residues 233–324 (PRIPPLVRLP…KGGPQQPHNK (92 aa)) are disordered. Positions 234-246 (RIPPLVRLPPPEP) are enriched in pro residues. Residues 247 to 269 (TTVASTTSVTTSTSAPVRPTSTT) are compositionally biased toward low complexity. Positions 283–295 (GVEHEASRDEEPR) are enriched in basic and acidic residues. The GPI-anchor amidated cysteine moiety is linked to residue C326. Positions 327–346 (VAPTAGLAALLLAVAAGVLL) are cleaved as a propeptide — removed in mature form.

In terms of assembly, binds laminin-1 and laminin-5. Interacts with LGALS3. Interacts with AGR2 and AGR3. In terms of processing, N-glycosylated and O-glycosylated. As to expression, expressed in placenta, skin and urothelium. Found in suprabasal keratinocytes of chronic wounds. Weak expression is found in esophagus and peripheral blood mononuclear cells. Found in the majority of primary and metastatic transitional cell carcinomas (TCCs) and as well in breast cancer tissues, but not in adjacent normal tissues. High expression is found in the tumor component of some noninvasive superficial lesions and in invasive and metastatic urothelial cancers.

It localises to the cell membrane. Functionally, supports cell migration. May be involved in urothelial cell-matrix interactions. May be involved in tumor progression. The sequence is that of Ly6/PLAUR domain-containing protein 3 (LYPD3) from Homo sapiens (Human).